The following is a 332-amino-acid chain: Arabinogalactan endo-beta-1,4-galactanase (332 aa).

N-linked (GlcNAc...) asparagine glycosylation is present at Asn-111. The Proton donor role is filled by Glu-135. The active-site Nucleophile is Glu-245.

Belongs to the glycosyl hydrolase 53 family.

The enzyme catalyses The enzyme specifically hydrolyzes (1-&gt;4)-beta-D-galactosidic linkages in type I arabinogalactans.. In Humicola insolens (Soft-rot fungus), this protein is Arabinogalactan endo-beta-1,4-galactanase.